Reading from the N-terminus, the 54-residue chain is ATP synthase protein 8 (54 aa).

The chain crosses the membrane as a helical span at residues Trp-8 to Val-28.

This sequence belongs to the ATPase protein 8 family. F-type ATPases have 2 components, CF(1) - the catalytic core - and CF(0) - the membrane proton channel.

The protein resides in the mitochondrion membrane. Mitochondrial membrane ATP synthase (F(1)F(0) ATP synthase or Complex V) produces ATP from ADP in the presence of a proton gradient across the membrane which is generated by electron transport complexes of the respiratory chain. F-type ATPases consist of two structural domains, F(1) - containing the extramembraneous catalytic core and F(0) - containing the membrane proton channel, linked together by a central stalk and a peripheral stalk. During catalysis, ATP synthesis in the catalytic domain of F(1) is coupled via a rotary mechanism of the central stalk subunits to proton translocation. Part of the complex F(0) domain. Minor subunit located with subunit a in the membrane. In Paracentrotus lividus (Common sea urchin), this protein is ATP synthase protein 8 (MT-ATP8).